Consider the following 485-residue polypeptide: Beta-amyrin 28-monooxygenase CYP716A378 (485 aa).

Residues 3–23 (LFFICGLVLFSTLSLISLFLL) traverse the membrane as a helical; Signal-anchor for type II membrane protein segment. N-linked (GlcNAc...) asparagine glycosylation is found at N25 and N386. C426 contributes to the heme binding site.

The protein belongs to the cytochrome P450 family. The cofactor is heme. Mainly expressed in flowers and flower buds, to a lesser extent in young leaves and, at low levels, in old leaves, stems and roots.

The protein localises to the membrane. The enzyme catalyses beta-amyrin + 3 reduced [NADPH--hemoprotein reductase] + 3 O2 = oleanolate + 3 oxidized [NADPH--hemoprotein reductase] + 4 H2O + 4 H(+). It participates in secondary metabolite biosynthesis; terpenoid biosynthesis. Its function is as follows. Component of the oleanane-type triterpene saponins (e.g. saponarioside A and saponarioside B) biosynthetic pathway, leading to the production of natural products with detergent properties used as traditional sources of soap. An oxidoreductase that facilitates the oxidation of the methyl group to a carboxyl group at the C-28 position of beta-amyrin, resulting in the formation of oleanolate. The sequence is that of Beta-amyrin 28-monooxygenase CYP716A378 from Saponaria officinalis (Common soapwort).